Consider the following 507-residue polypeptide: UDP-N-acetylmuramoyl-L-alanyl-D-glutamate--2,6-diaminopimelate ligase (507 aa).

Residue Ser32 participates in UDP-N-acetyl-alpha-D-muramoyl-L-alanyl-D-glutamate binding. Residue Gly117–Thr123 coordinates ATP. Residues Thr159–Thr160, Ser186, Gln192, and Arg194 contribute to the UDP-N-acetyl-alpha-D-muramoyl-L-alanyl-D-glutamate site. Lys226 carries the post-translational modification N6-carboxylysine. Meso-2,6-diaminopimelate-binding positions include Arg400, Asp424–Arg427, Gly475, and Glu479. The Meso-diaminopimelate recognition motif signature appears at Asp424 to Arg427.

This sequence belongs to the MurCDEF family. MurE subfamily. It depends on Mg(2+) as a cofactor. Carboxylation is probably crucial for Mg(2+) binding and, consequently, for the gamma-phosphate positioning of ATP.

Its subcellular location is the cytoplasm. The catalysed reaction is UDP-N-acetyl-alpha-D-muramoyl-L-alanyl-D-glutamate + meso-2,6-diaminopimelate + ATP = UDP-N-acetyl-alpha-D-muramoyl-L-alanyl-gamma-D-glutamyl-meso-2,6-diaminopimelate + ADP + phosphate + H(+). Its pathway is cell wall biogenesis; peptidoglycan biosynthesis. In terms of biological role, catalyzes the addition of meso-diaminopimelic acid to the nucleotide precursor UDP-N-acetylmuramoyl-L-alanyl-D-glutamate (UMAG) in the biosynthesis of bacterial cell-wall peptidoglycan. This Prochlorococcus marinus (strain MIT 9313) protein is UDP-N-acetylmuramoyl-L-alanyl-D-glutamate--2,6-diaminopimelate ligase.